The sequence spans 483 residues: MLNASLKQLSAMLAARKISSVELTSEFLKRSRALNPEYNAFITLDERTSLAQAQAADILIGSGRGQPLTGVPIAQKDIFCTKGWLTTCGSKMLSNFISPYDAHVIGRFNAVGAVNIGKTNMDEFAMGSSNETSFYGPVKNPWDTAAVPGGSSGGSACAVAARMAPAATGTDTGGSIRQPAALCGISGLKPTYGLVSRYGMIAFASSLDQGGPMAKSAEDLGLMLNVMAGFDARDSTSLEREPEDYTRDLEKPLDGLRIGLPKEYFVKEIAEDVARAVEAAIGQYRKLGAETVEVSLPNTKLSVPVYYVLAPAEASSNLSRFDGVRYGYRAPDYLDLNDMYRKTRAQGFGSEVKRRILIGTYVLSHGYYDAYYIQAQKLRRLMAQDFAEAFKECDIIMGPTSPTVAFDLGERSSDPVQMYLSDAYTIAVNLAGLPAMSIPVGFGHKNRPVGLHIIGNYFAEAQMLNVAHQYQLESDWHTRMPKE.

Active-site charge relay system residues include lysine 76 and serine 151. Serine 175 functions as the Acyl-ester intermediate in the catalytic mechanism.

Belongs to the amidase family. GatA subfamily. Heterotrimer of A, B and C subunits.

It carries out the reaction L-glutamyl-tRNA(Gln) + L-glutamine + ATP + H2O = L-glutaminyl-tRNA(Gln) + L-glutamate + ADP + phosphate + H(+). Allows the formation of correctly charged Gln-tRNA(Gln) through the transamidation of misacylated Glu-tRNA(Gln) in organisms which lack glutaminyl-tRNA synthetase. The reaction takes place in the presence of glutamine and ATP through an activated gamma-phospho-Glu-tRNA(Gln). In Nitrosospira multiformis (strain ATCC 25196 / NCIMB 11849 / C 71), this protein is Glutamyl-tRNA(Gln) amidotransferase subunit A.